Here is a 243-residue protein sequence, read N- to C-terminus: Triosephosphate isomerase (243 aa).

Residue 9-11 coordinates substrate; sequence NWK. His96 serves as the catalytic Electrophile. The Proton acceptor role is filled by Glu165. Substrate contacts are provided by residues Gly171, Ser204, and 225 to 226; that span reads GG.

The protein belongs to the triosephosphate isomerase family. As to quaternary structure, homodimer.

It is found in the cytoplasm. The catalysed reaction is D-glyceraldehyde 3-phosphate = dihydroxyacetone phosphate. Its pathway is carbohydrate biosynthesis; gluconeogenesis. The protein operates within carbohydrate degradation; glycolysis; D-glyceraldehyde 3-phosphate from glycerone phosphate: step 1/1. Functionally, involved in the gluconeogenesis. Catalyzes stereospecifically the conversion of dihydroxyacetone phosphate (DHAP) to D-glyceraldehyde-3-phosphate (G3P). The polypeptide is Triosephosphate isomerase (Synechococcus sp. (strain WH7803)).